The primary structure comprises 891 residues: uncharacterized protein (891 aa).

Residues 48-64 are compositionally biased toward basic and acidic residues; that stretch reads GHKKPRSESRKKYDAKK. Residues 48 to 86 are disordered; that stretch reads GHKKPRSESRKKYDAKKQHQSSHFATPVKGVESSEPTEK. A phosphoserine mark is found at serine 261, serine 263, serine 265, and serine 268. A disordered region spans residues 795–822; sequence QRTFSNESPRAVDSGFSRTSTPFSESTS. A compositionally biased stretch (polar residues) spans 810-822; sequence FSRTSTPFSESTS.

It is found in the nucleus. This is an uncharacterized protein from Schizosaccharomyces pombe (strain 972 / ATCC 24843) (Fission yeast).